We begin with the raw amino-acid sequence, 365 residues long: MTYFDPKIQESDFALSSYDYTLPFSAIAQNPANPRERAKLLIYQRDSGRIIHSDFYHFCDFVPKDTLLVFNDTRVIKARIYAHKLDCNTQKLSDKTFEIFYHKPLQSTSSAIPLFLVQIKGRVKCGDKLLINTDSTNPFLIAQVQECLDNGLRVVSFMQNEHALEYIQVLDMLEKYGHTPLPPYIKREDSCQDAHFYQSVFSKQLGSIAAPTASLHFSKESIESIKAQFETCFLTLHIGAGTFMNVESADIRHHLIHKEFFSLSPQSAAAIQNAHKVLCIGTTSARCVEYYARYKILQGECDIFLYPSKSFKRVDYLLTNFHLPKSTLMMLVSAMVGREKCLELYKLALEKGYRFYSYGDGMLIL.

Belongs to the QueA family. Monomer.

Its subcellular location is the cytoplasm. It catalyses the reaction 7-aminomethyl-7-carbaguanosine(34) in tRNA + S-adenosyl-L-methionine = epoxyqueuosine(34) in tRNA + adenine + L-methionine + 2 H(+). The protein operates within tRNA modification; tRNA-queuosine biosynthesis. Functionally, transfers and isomerizes the ribose moiety from AdoMet to the 7-aminomethyl group of 7-deazaguanine (preQ1-tRNA) to give epoxyqueuosine (oQ-tRNA). In Helicobacter hepaticus (strain ATCC 51449 / 3B1), this protein is S-adenosylmethionine:tRNA ribosyltransferase-isomerase.